Reading from the N-terminus, the 205-residue chain is Regulator of G-protein signaling 4 (205 aa).

S-palmitoyl cysteine attachment occurs at residues cysteine 2, cysteine 12, and cysteine 95. An RGS domain is found at 62 to 178; it reads SLENLISHEC…LKSRFYLDLV (117 aa).

Palmitoylated on Cys-2 and/or Cys-12. Post-translationally, phosphorylated by cyclic GMP-dependent protein kinase.

Inhibits signal transduction by increasing the GTPase activity of G protein alpha subunits thereby driving them into their inactive GDP-bound form. Activity on G(z)-alpha is inhibited by phosphorylation of the G-protein. Activity on G(z)-alpha and G(i)-alpha-1 is inhibited by palmitoylation of the G-protein. The sequence is that of Regulator of G-protein signaling 4 (RGS4) from Pongo abelii (Sumatran orangutan).